We begin with the raw amino-acid sequence, 205 residues long: Octanoyltransferase (205 aa).

Residues 30-205 (NLSDELVWLL…ILKQEFHKIF (176 aa)) enclose the BPL/LPL catalytic domain. Residues 68-75 (RGGKYTYH), 140-142 (AFG), and 153-155 (GIA) contribute to the substrate site. Cys-171 (acyl-thioester intermediate) is an active-site residue.

The protein belongs to the LipB family.

The protein resides in the cytoplasm. It carries out the reaction octanoyl-[ACP] + L-lysyl-[protein] = N(6)-octanoyl-L-lysyl-[protein] + holo-[ACP] + H(+). It functions in the pathway protein modification; protein lipoylation via endogenous pathway; protein N(6)-(lipoyl)lysine from octanoyl-[acyl-carrier-protein]: step 1/2. Catalyzes the transfer of endogenously produced octanoic acid from octanoyl-acyl-carrier-protein onto the lipoyl domains of lipoate-dependent enzymes. Lipoyl-ACP can also act as a substrate although octanoyl-ACP is likely to be the physiological substrate. In Wolbachia pipientis subsp. Culex pipiens (strain wPip), this protein is Octanoyltransferase.